Reading from the N-terminus, the 104-residue chain is Thioredoxin (104 aa).

A Thioredoxin domain is found at 2 to 104; that stretch reads AIVKVTDADF…NLAEVLDKHL (103 aa). A disulfide bridge links C29 with C32.

This sequence belongs to the thioredoxin family.

In terms of biological role, component of the thioredoxin-thioredoxin reductase system. Participates in various redox reactions through the reversible oxidation of its active center dithiol to a disulfide and catalyzes dithiol-disulfide exchange reactions. The polypeptide is Thioredoxin (trxA) (Staphylococcus aureus (strain N315)).